Consider the following 355-residue polypeptide: UPF0421 protein BCE33L2478 (355 aa).

4 helical membrane-spanning segments follow: residues 19 to 39, 74 to 94, 109 to 129, and 131 to 151; these read IAVFLTVLVCEFFNIPTIFAV, FTFFLGHQALSYALAAMFTIV, TLTAVAMIPITADHYFTAFLI, and LATTSTGIIVSTVVNFFILPP.

It belongs to the UPF0421 family.

It is found in the cell membrane. The polypeptide is UPF0421 protein BCE33L2478 (Bacillus cereus (strain ZK / E33L)).